The primary structure comprises 99 residues: High mobility group protein I (99 aa).

Positions 1-99 are disordered; that stretch reads MSDSPVKKGR…ADTEEVNSSD (99 aa). Phosphoserine; by CDC2 and MAPK is present on S4. Positions 7–19 form a DNA-binding region, a.T hook 1; it reads KKGRGRPAKAKPE. The segment covering 16–46 has biased composition (basic and acidic residues); it reads AKPEETASPKAAKKEEKKVEEVPKKIEESTK. Residue S23 is modified to Phosphoserine; by MAPK. Positions 54–66 form a DNA-binding region, a.T hook 2; sequence KKGRGRPSKGDKA. S73 carries the post-translational modification Phosphoserine; by PKC. Positions 74–86 form a DNA-binding region, a.T hook 3; it reads GKGRGRPAKNAKK. A compositionally biased stretch (acidic residues) spans 90–99; the sequence is ADTEEVNSSD.

This sequence belongs to the HMGA family. In terms of processing, phosphorylated in a cell-cycle dependent manner; substantially reduced in cells that have finished proliferating and are differentiated. Phosphorylation at Ser-4 and Ser-23 results in a 10-fold weakening of DNA-binding activity and altered the mode of protein-DNA interaction.

Its subcellular location is the nucleus. It is found in the nucleolus. The protein localises to the chromosome. Functionally, binds preferentially to the minor groove of A+T rich regions in double-stranded DNA via the second and third DBA-binding domains. It is suggested that these proteins could function in nucleosome phasing and in the 3'-end processing of mRNA transcripts. They are also involved in the transcription regulation of genes containing, or in close proximity to A+T-rich regions. In Chironomus tentans (Midge), this protein is High mobility group protein I.